Reading from the N-terminus, the 273-residue chain is HUWE1-associated protein modifying stress responses 2 (273 aa).

Disordered regions lie at residues 146–181, 204–230, and 251–273; these read GKVP…SSSV, ISMR…FLED, and KRTS…NRMV. Positions 149-165 are enriched in pro residues; sequence PPAPPPPRTPRTPPKPP. Composition is skewed to polar residues over residues 170-181, 208-218, and 254-267; these read SQAVATESSSSV, SGDSPQDSGVA, and SAQC…SPIQ. The nuclear localization signal stretch occupies residues 249–273; it reads IRKRTSAQCSDGITDSPIQKRNRMV.

Belongs to the HAPSTR1 family. In terms of assembly, homooligomer. Heterooligomer with HAPSTR1; the interaction is direct and stabilizes HAPSTR1 independently of HUWE1. Interacts with HUWE1. Expressed in a tissue-restricted manner compared to HAPSTR1.

Its subcellular location is the nucleus. Its function is as follows. Together with HAPSTR1 plays a central regulatory role in the cellular response to molecular stressors, such as DNA damage, nutrient scarcity, and protein misfolding. Regulates these multiple stress response signaling pathways by stabilizing HAPSTR1, but also independently of HAPSTR1. The sequence is that of HUWE1-associated protein modifying stress responses 2 from Homo sapiens (Human).